The following is a 418-amino-acid chain: Putative ion-transport protein YfeO (418 aa).

The next 12 membrane-spanning stretches (helical) occupy residues 10–30, 54–74, 99–119, 120–140, 149–169, 186–206, 223–243, 258–278, 300–320, 322–342, 343–363, and 371–391; these read LLLS…LIVV, DSPL…GLVI, ALPG…SLGP, EHPI…RLLP, ILAS…AALI, LFAP…FFHP, ILSG…AVWC, VLVL…GGPV, DYFL…ASGF, GGRI…LHEH, VPAV…VLVV, and LFMA…CIVM.

Belongs to the chloride channel (TC 2.A.49) family.

The protein localises to the cell membrane. This chain is Putative ion-transport protein YfeO, found in Escherichia coli O139:H28 (strain E24377A / ETEC).